Consider the following 711-residue polypeptide: Origin recognition complex subunit 3 (711 aa).

Residues Ser23 and Ser516 each carry the phosphoserine modification.

Belongs to the ORC3 family. As to quaternary structure, component of ORC, a complex composed of at least 6 subunits: ORC1, ORC2, ORC3, ORC4, ORC5 and ORC6. ORC is regulated in a cell-cycle dependent manner. It is sequentially assembled at the exit from anaphase of mitosis and disassembled as cells enter S phase. Multi-mono-ubiquitinated by OBI1; ubiquitination is important for efficient DNA replication origin site activation. Ubiquitination levels are low in mitotic and early G1-phAse cells and are induced in late G1-/early S-phase, peaking in S-phase and decrease toward the end of the cell cycle.

The protein localises to the nucleus. It is found in the chromosome. In terms of biological role, component of the origin recognition complex (ORC) that binds origins of replication. DNA-binding is ATP-dependent. The specific DNA sequences that define origins of replication have not been identified yet. ORC is required to assemble the pre-replication complex necessary to initiate DNA replication. Binds histone H3 and H4 trimethylation marks H3K9me3, H3K27me3 and H4K20me3. This Homo sapiens (Human) protein is Origin recognition complex subunit 3 (ORC3).